Consider the following 440-residue polypeptide: ATP-dependent protease ATPase subunit HslU (440 aa).

ATP-binding positions include valine 18, 60–65, aspartate 254, glutamate 319, and arginine 391; that span reads GVGKTE.

This sequence belongs to the ClpX chaperone family. HslU subfamily. In terms of assembly, a double ring-shaped homohexamer of HslV is capped on each side by a ring-shaped HslU homohexamer. The assembly of the HslU/HslV complex is dependent on binding of ATP.

It is found in the cytoplasm. ATPase subunit of a proteasome-like degradation complex; this subunit has chaperone activity. The binding of ATP and its subsequent hydrolysis by HslU are essential for unfolding of protein substrates subsequently hydrolyzed by HslV. HslU recognizes the N-terminal part of its protein substrates and unfolds these before they are guided to HslV for hydrolysis. The protein is ATP-dependent protease ATPase subunit HslU of Cellvibrio japonicus (strain Ueda107) (Pseudomonas fluorescens subsp. cellulosa).